The primary structure comprises 359 residues: UDP-N-acetylglucosamine--N-acetylmuramyl-(pentapeptide) pyrophosphoryl-undecaprenol N-acetylglucosamine transferase (359 aa).

UDP-N-acetyl-alpha-D-glucosamine-binding positions include threonine 13–glycine 15, asparagine 125, arginine 161, serine 193, isoleucine 241, and glutamine 285.

It belongs to the glycosyltransferase 28 family. MurG subfamily.

It is found in the cell membrane. It carries out the reaction di-trans,octa-cis-undecaprenyl diphospho-N-acetyl-alpha-D-muramoyl-L-alanyl-D-glutamyl-meso-2,6-diaminopimeloyl-D-alanyl-D-alanine + UDP-N-acetyl-alpha-D-glucosamine = di-trans,octa-cis-undecaprenyl diphospho-[N-acetyl-alpha-D-glucosaminyl-(1-&gt;4)]-N-acetyl-alpha-D-muramoyl-L-alanyl-D-glutamyl-meso-2,6-diaminopimeloyl-D-alanyl-D-alanine + UDP + H(+). Its pathway is cell wall biogenesis; peptidoglycan biosynthesis. Its function is as follows. Cell wall formation. Catalyzes the transfer of a GlcNAc subunit on undecaprenyl-pyrophosphoryl-MurNAc-pentapeptide (lipid intermediate I) to form undecaprenyl-pyrophosphoryl-MurNAc-(pentapeptide)GlcNAc (lipid intermediate II). The sequence is that of UDP-N-acetylglucosamine--N-acetylmuramyl-(pentapeptide) pyrophosphoryl-undecaprenol N-acetylglucosamine transferase from Corynebacterium diphtheriae (strain ATCC 700971 / NCTC 13129 / Biotype gravis).